The following is a 578-amino-acid chain: 2-succinyl-5-enolpyruvyl-6-hydroxy-3-cyclohexene-1-carboxylate synthase (578 aa).

The disordered stretch occupies residues 186–208 (LPAAGGEHHPAEPRSTPWDGPVP).

It belongs to the TPP enzyme family. MenD subfamily. As to quaternary structure, homodimer. Mg(2+) serves as cofactor. Requires Mn(2+) as cofactor. The cofactor is thiamine diphosphate.

The enzyme catalyses isochorismate + 2-oxoglutarate + H(+) = 5-enolpyruvoyl-6-hydroxy-2-succinyl-cyclohex-3-ene-1-carboxylate + CO2. It functions in the pathway quinol/quinone metabolism; 1,4-dihydroxy-2-naphthoate biosynthesis; 1,4-dihydroxy-2-naphthoate from chorismate: step 2/7. Its pathway is cofactor biosynthesis; phylloquinone biosynthesis. Functionally, catalyzes the thiamine diphosphate-dependent decarboxylation of 2-oxoglutarate and the subsequent addition of the resulting succinic semialdehyde-thiamine pyrophosphate anion to isochorismate to yield 2-succinyl-5-enolpyruvyl-6-hydroxy-3-cyclohexene-1-carboxylate (SEPHCHC). The polypeptide is 2-succinyl-5-enolpyruvyl-6-hydroxy-3-cyclohexene-1-carboxylate synthase (Synechococcus sp. (strain WH7803)).